The following is a 427-amino-acid chain: MDSTQIKQGNLRYLIHLLLASLAGLSIAIIVTHAPVFWRLRSSKNTLDPPGFREGLNMLIPEIHFDAEVQDPLYGEALAALKAASAMKHGGKHSKAVKLFQQAVSLAPHHPEILLQYGEFLEQHDVVQAEHLYNRALTANPLDSRALANRQRALPKVKQLDQEMLDKIDEKRDKLFSIPAGSLPMKRAIKEAYFQHIYHSNAIEGNTMTLSMTRAIVETKMAVPGKSILEHNEVLGLDEALKYVNSTLIQKSESITIDDIIEIHRRVLGHAHPLEAGRYRSTQVFVSDHVPPAPEDLEKQMNAFNDWLLSKDPEILHPIEFAALSHYKLVYIHPFTDGNGRTARLLMNAILMRAGFPPVIIRFQDRHDYYEYLNQANHGDIRPFIRFVARCTERTIDAYLASTTIYPLGHERTRELTDAHDEKDPNR.

Residues 17 to 37 traverse the membrane as a helical segment; the sequence is LLLASLAGLSIAIIVTHAPVF. 2 TPR repeats span residues 77–110 and 111–143; these read ALAALKAASAMKHGGKHSKAVKLFQQAVSLAPHH and PEILLQYGEFLEQHDVVQAEHLYNRALTANPLD. An Inhibitory (S/T)XXXE(G/N) motif motif is present at residues 200 to 205; the sequence is SNAIEG. ATP contacts are provided by residues Glu-204 and 286-289; that span reads VSDH. Residues 255 to 390 enclose the Fido domain; it reads ITIDDIIEIH…IRPFIRFVAR (136 aa). His-333 is an active-site residue. ATP contacts are provided by residues 337 to 344, 369 to 370, and Asn-377; these read DGNGRTAR and YY.

The protein belongs to the fic family. As to quaternary structure, homodimer.

It localises to the membrane. It carries out the reaction L-tyrosyl-[protein] + ATP = O-(5'-adenylyl)-L-tyrosyl-[protein] + diphosphate. The catalysed reaction is L-threonyl-[protein] + ATP = 3-O-(5'-adenylyl)-L-threonyl-[protein] + diphosphate. The enzyme catalyses 3-O-(5'-adenylyl)-L-threonyl-[protein] + H2O = L-threonyl-[protein] + AMP + H(+). With respect to regulation, the side chain of Glu-204 determines which of the two opposing activities (AMPylase or de-AMPylase) will take place. In response to endoplasmic reticulum stress, mediates de-AMPylase activity. Adenylyltransferase activity is inhibited by the inhibitory helix present at the N-terminus: Glu-204 binds ATP and competes with ATP-binding at Arg-344, thereby preventing adenylyltransferase activity. In unstressed cells, disengagement of Glu-204 promotes adenylyltransferase activity. Activation dissociates ATP-binding from Glu-204, allowing ordered binding of the entire ATP moiety with the alpha-phosphate in an orientation that is productive for accepting an incoming target hydroxyl side chain. Functionally, protein that can both mediate the addition of adenosine 5'-monophosphate (AMP) to specific residues of target proteins (AMPylation), and the removal of the same modification from target proteins (de-AMPylation), depending on the context. The side chain of Glu-204 determines which of the two opposing activities (AMPylase or de-AMPylase) will take place. Acts as a key regulator of the unfolded protein response (UPR) by mediating AMPylation or de-AMPylation of Hsc70-3/BiP. In unstressed cells, acts as an adenylyltransferase by mediating AMPylation of Hsc70-3/BiP, thereby inactivating it. In response to endoplasmic reticulum stress, acts as a phosphodiesterase by mediating removal of ATP (de-AMPylation) from Hsc70-3/BiP, leading to restore HSPA5/BiP activity. The chain is Protein adenylyltransferase Fic from Nematostella vectensis (Starlet sea anemone).